The sequence spans 326 residues: uncharacterized protein (326 aa).

The active-site Proton donor is the Tyr53. 215 to 225 (SPLAGGLLGGK) provides a ligand contact to NADP(+). The stretch at 242 to 305 (IEKHRLQLEK…AVEISLDKEI (64 aa)) forms a coiled coil.

Belongs to the aldo/keto reductase family. Aldo/keto reductase 2 subfamily.

This is an uncharacterized protein from Bacillus subtilis (strain 168).